A 134-amino-acid polypeptide reads, in one-letter code: Large ribosomal subunit protein bL17 (134 aa).

The protein belongs to the bacterial ribosomal protein bL17 family. Part of the 50S ribosomal subunit. Contacts protein L32.

This Paracidovorax citrulli (strain AAC00-1) (Acidovorax citrulli) protein is Large ribosomal subunit protein bL17.